Consider the following 396-residue polypeptide: MKVLVLNAGSSSLKCQYFIDEESIASVTIERIGEKESYTLLTYANEKREHTSTVKNHHDAIDTLFSLLKESHIITDVTELNAVGHRIVHGGPHFSRPTLINTEVIEQIRSLIPLAPLHNPSNLEGIEVIAKVYPALKQVAVFDTAFHQTMPEYAARYPLPYDLYEEAHVRRYGFHGTSHAYVAKEAAKILQQPLETLNLITLHLGNGASATAIKKGRSIDTSMGMTPLEGLMMGSRSGDIDPAIIPYLVRTQKIDVETIDSMLNKESGLKGVCGNNDMREIIDKMDEGDEKSRLALEMYVYRIKKYIGAYSATLGHVDALVFTGGIGEHAALVREMVCEGMEYTFGIILEKKKNDSAKQEASAIHSRESRTDILVIPTDEELEIVRQTEVIVSRLS.

Position 7 (Asn-7) interacts with Mg(2+). Residue Lys-14 coordinates ATP. Arg-86 contacts substrate. The active-site Proton donor/acceptor is the Asp-143. Residues 203-207 (HLGNG), 277-279 (DMR), and 325-329 (GIGEH) contribute to the ATP site. Glu-380 lines the Mg(2+) pocket.

The protein belongs to the acetokinase family. In terms of assembly, homodimer. The cofactor is Mg(2+). Requires Mn(2+) as cofactor.

It is found in the cytoplasm. The catalysed reaction is acetate + ATP = acetyl phosphate + ADP. Its pathway is metabolic intermediate biosynthesis; acetyl-CoA biosynthesis; acetyl-CoA from acetate: step 1/2. In terms of biological role, catalyzes the formation of acetyl phosphate from acetate and ATP. Can also catalyze the reverse reaction. The chain is Acetate kinase from Sulfurovum sp. (strain NBC37-1).